Reading from the N-terminus, the 353-residue chain is Histidinol-phosphate aminotransferase (353 aa).

Lysine 211 carries the N6-(pyridoxal phosphate)lysine modification.

It belongs to the class-II pyridoxal-phosphate-dependent aminotransferase family. Histidinol-phosphate aminotransferase subfamily. As to quaternary structure, homodimer. Pyridoxal 5'-phosphate is required as a cofactor.

The enzyme catalyses L-histidinol phosphate + 2-oxoglutarate = 3-(imidazol-4-yl)-2-oxopropyl phosphate + L-glutamate. It functions in the pathway amino-acid biosynthesis; L-histidine biosynthesis; L-histidine from 5-phospho-alpha-D-ribose 1-diphosphate: step 7/9. This chain is Histidinol-phosphate aminotransferase, found in Klebsiella pneumoniae subsp. pneumoniae (strain ATCC 700721 / MGH 78578).